The chain runs to 354 residues: Falstatin (354 aa).

The N-terminal stretch at 1-21 (MKSITFFVFNICSILALLSHC) is a signal peptide. A BC loop; binds and inhibits the active site cavity of cysteine proteases motif is present at residues 226 to 236 (LEGNAGTGYLW). Positions 274–317 (KYKIDEHDSSKNVNREIESPEQKESDSKPKKPQMQLLGGPDRMR) are disordered. The span at 275-302 (YKIDEHDSSKNVNREIESPEQKESDSKP) shows a compositional bias: basic and acidic residues.

This sequence belongs to the protease inhibitor I71 family. Oligomer; probably composed of 10 monomers. In terms of processing, during the liver stage, proteolytically cleaved.

The protein resides in the secreted. It is found in the cytoplasmic vesicle. It localises to the secretory vesicle. The protein localises to the microneme. Its subcellular location is the host cytoplasm. The protein resides in the parasitophorous vacuole lumen. In terms of biological role, cysteine protease inhibitor. Required for the invasion of host erythrocytes by merozoites. In the mosquito vector, essential for the gliding motility of hemocoel sporozoites and, therefore, for salivary gland invasion and the subsequent transmission from the mosquito to the mammalian host. Required for the invasion of host hepatocytes. During the liver stage, may prevent host hepatocyte cell death likely by inhibiting host cysteine proteases. This is Falstatin from Plasmodium berghei (strain Anka).